Here is a 390-residue protein sequence, read N- to C-terminus: tRNA-specific 2-thiouridylase MnmA (390 aa).

Residues 33-40 (AMSGGVDS) and M59 each bind ATP. Residue C131 is the Nucleophile of the active site. Cysteines 131 and 230 form a disulfide. G155 is a binding site for ATP. Positions 180 to 182 (KDQ) are interaction with tRNA. C230 functions as the Cysteine persulfide intermediate in the catalytic mechanism.

Belongs to the MnmA/TRMU family.

The protein localises to the cytoplasm. It catalyses the reaction S-sulfanyl-L-cysteinyl-[protein] + uridine(34) in tRNA + AH2 + ATP = 2-thiouridine(34) in tRNA + L-cysteinyl-[protein] + A + AMP + diphosphate + H(+). Its function is as follows. Catalyzes the 2-thiolation of uridine at the wobble position (U34) of tRNA, leading to the formation of s(2)U34. This Symbiobacterium thermophilum (strain DSM 24528 / JCM 14929 / IAM 14863 / T) protein is tRNA-specific 2-thiouridylase MnmA.